Consider the following 162-residue polypeptide: Caveolin-2 (162 aa).

Residues 1–86 (MGLESEKADV…FEISKYVLYK (86 aa)) lie on the Cytoplasmic side of the membrane. The residue at position 19 (Y19) is a Phosphotyrosine. Phosphoserine occurs at positions 20, 23, and 36. The segment at residues 87 to 107 (FLTFFLAIPLAFAAGILFAIL) is an intramembrane region (helical). Topologically, residues 108–162 (SCLHIWIIMPFVKTCLMVLPSVQTIWKSVTDVVIAPLCTSVGRSFSSVSLQLSQD) are cytoplasmic.

This sequence belongs to the caveolin family. As to quaternary structure, monomer or homodimer. Interacts with CAV1; the interaction forms a stable heterooligomeric complex that is required for targeting to lipid rafts and for caveolae formation. Tyrosine phosphorylated forms do not form heterooligomers with the Tyr-19-phosphorylated form existing as a monomer or dimer. Interacts (tyrosine phosphorylated form) with the SH2 domain-containing proteins, RASA1, NCK1 and SRC. Interacts (tyrosine phosphorylated form) with INSR. Interacts (Tyr-19 phosphorylated form) with MAPK1 (phosphorylated form); the interaction, promoted by insulin, leads to nuclear location and MAPK1 activation. Interacts with STAT3; the interaction is increased on insulin-induced tyrosine phosphorylation leading to STAT activation. Phosphorylated on serine and tyrosine residues. CAV1 promotes phosphorylation on Ser-23 which then targets the complex to the plasma membrane, lipid rafts and caveolae. Phosphorylation on Ser-36 appears to modulate mitosis in endothelial cells. Phosphorylation on Tyr-19 is required for insulin-induced phosphorylation of MAPK1 and DNA binding of STAT3. Tyrosine phosphorylation is induced by both EGF and insulin.

The protein resides in the nucleus. The protein localises to the golgi apparatus membrane. It is found in the cell membrane. It localises to the membrane. Its subcellular location is the caveola. Functionally, may act as a scaffolding protein within caveolar membranes. Interacts directly with G-protein alpha subunits and can functionally regulate their activity. Acts as an accessory protein in conjunction with CAV1 in targeting to lipid rafts and driving caveolae formation. The Ser-36 phosphorylated form has a role in modulating mitosis in endothelial cells. Positive regulator of cellular mitogenesis of the MAPK signaling pathway. Required for the insulin-stimulated nuclear translocation and activation of MAPK1 and STAT3, and the subsequent regulation of cell cycle progression. The sequence is that of Caveolin-2 (CAV2) from Echinops telfairi (Lesser hedgehog tenrec).